The following is a 262-amino-acid chain: Phosphonates import ATP-binding protein PhnC 3 (262 aa).

One can recognise an ABC transporter domain in the interval 3–245 (IQLECLSVTY…ELNRIYGNAE (243 aa)). 36–43 (GASGSGKS) is an ATP binding site.

It belongs to the ABC transporter superfamily. Phosphonates importer (TC 3.A.1.9.1) family. As to quaternary structure, the complex is composed of two ATP-binding proteins (PhnC), two transmembrane proteins (PhnE) and a solute-binding protein (PhnD).

The protein localises to the cell inner membrane. The enzyme catalyses phosphonate(out) + ATP + H2O = phosphonate(in) + ADP + phosphate + H(+). Part of the ABC transporter complex PhnCDE involved in phosphonates import. Responsible for energy coupling to the transport system. The chain is Phosphonates import ATP-binding protein PhnC 3 from Nostoc sp. (strain PCC 7120 / SAG 25.82 / UTEX 2576).